Consider the following 161-residue polypeptide: Phosphopantetheine adenylyltransferase (161 aa).

Substrate is bound at residue S9. ATP is bound by residues 9 to 10 and H17; that span reads SF. Substrate contacts are provided by K41, L73, and R87. ATP contacts are provided by residues 88–90, E98, and 123–129; these read GIR and TGFISST.

It belongs to the bacterial CoaD family. As to quaternary structure, homohexamer. Mg(2+) serves as cofactor.

The protein resides in the cytoplasm. It carries out the reaction (R)-4'-phosphopantetheine + ATP + H(+) = 3'-dephospho-CoA + diphosphate. The protein operates within cofactor biosynthesis; coenzyme A biosynthesis; CoA from (R)-pantothenate: step 4/5. Reversibly transfers an adenylyl group from ATP to 4'-phosphopantetheine, yielding dephospho-CoA (dPCoA) and pyrophosphate. The sequence is that of Phosphopantetheine adenylyltransferase from Psychromonas ingrahamii (strain DSM 17664 / CCUG 51855 / 37).